The chain runs to 72 residues: Holocyclotoxin-1 (72 aa).

Residues 1-22 (MSKVTTVFIGALVLLLLIENGF) form the signal peptide. 4 disulfides stabilise this stretch: Cys-24–Cys-40, Cys-32–Cys-57, Cys-36–Cys-60, and Cys-42–Cys-70.

Expressed in salivary glands.

The protein localises to the secreted. Probable neurotoxin. The polypeptide is Holocyclotoxin-1 (Ixodes holocyclus (Australian paralysis tick)).